Consider the following 170-residue polypeptide: Peptide deformylase (170 aa).

Fe cation-binding residues include C94 and H136. Residue E137 is part of the active site. H140 provides a ligand contact to Fe cation.

This sequence belongs to the polypeptide deformylase family. Fe(2+) serves as cofactor.

It carries out the reaction N-terminal N-formyl-L-methionyl-[peptide] + H2O = N-terminal L-methionyl-[peptide] + formate. Removes the formyl group from the N-terminal Met of newly synthesized proteins. Requires at least a dipeptide for an efficient rate of reaction. N-terminal L-methionine is a prerequisite for activity but the enzyme has broad specificity at other positions. This is Peptide deformylase from Stenotrophomonas maltophilia (strain K279a).